The following is a 460-amino-acid chain: Cysteine--tRNA ligase (460 aa).

Position 28 (C28) interacts with Zn(2+). The 'HIGH' region signature appears at V30–H40. C209, H234, and E238 together coordinate Zn(2+). Residues K266–S270 carry the 'KMSKS' region motif. Residue K269 coordinates ATP.

The protein belongs to the class-I aminoacyl-tRNA synthetase family. As to quaternary structure, monomer. It depends on Zn(2+) as a cofactor.

It is found in the cytoplasm. The catalysed reaction is tRNA(Cys) + L-cysteine + ATP = L-cysteinyl-tRNA(Cys) + AMP + diphosphate. The polypeptide is Cysteine--tRNA ligase (Shewanella frigidimarina (strain NCIMB 400)).